Consider the following 292-residue polypeptide: 4-hydroxy-tetrahydrodipicolinate synthase (292 aa).

Pyruvate is bound at residue threonine 45. Tyrosine 133 acts as the Proton donor/acceptor in catalysis. The Schiff-base intermediate with substrate role is filled by lysine 161. Position 203 (isoleucine 203) interacts with pyruvate.

This sequence belongs to the DapA family. In terms of assembly, homotetramer; dimer of dimers.

Its subcellular location is the cytoplasm. The catalysed reaction is L-aspartate 4-semialdehyde + pyruvate = (2S,4S)-4-hydroxy-2,3,4,5-tetrahydrodipicolinate + H2O + H(+). It functions in the pathway amino-acid biosynthesis; L-lysine biosynthesis via DAP pathway; (S)-tetrahydrodipicolinate from L-aspartate: step 3/4. Its function is as follows. Catalyzes the condensation of (S)-aspartate-beta-semialdehyde [(S)-ASA] and pyruvate to 4-hydroxy-tetrahydrodipicolinate (HTPA). The sequence is that of 4-hydroxy-tetrahydrodipicolinate synthase from Escherichia fergusonii (strain ATCC 35469 / DSM 13698 / CCUG 18766 / IAM 14443 / JCM 21226 / LMG 7866 / NBRC 102419 / NCTC 12128 / CDC 0568-73).